The chain runs to 878 residues: Enoyl-CoA isomerase/hydratase claC (878 aa).

The interval V541 to D561 is disordered. Substrate-binding positions include A677 to L681 and G724.

This sequence belongs to the enoyl-CoA hydratase/isomerase family.

The protein operates within secondary metabolite biosynthesis. Functionally, enoyl-CoA isomerase/hydratase; part of the cla gene cluster that produces clavatol and ortho-quinone methide. The clavatol biosynthesis cluster cla and the terrestric acid cluster tra are both involved in the production of peniphenones and penilactones. The non-reducing PKS claF is responsible for the formation of clavatol from successive condensations of 3 malonyl-CoA units, presumably with a simple acetyl-CoA starter unit, and 2 methylation steps. The esterase claE probably collaborates with claF by catalyzing the hydrolysis of ACP-bound acyl intermediates to free the ACP from stalled intermediates. The clavatol oxidase claD then converts clavatol to hydroxyclavatol. Spontaneous dehydration of hydroxyclavatol leads to the accumulation of the highly active ortho-quinone methide. On the other hand, the PKS-NRPS hybrid traA is involved in the formation of crustosic acid, with the help of traB and traD. The polyketide synthase module (PKS) of traA is responsible for the synthesis of the polyketide backbone via the condensation of an acetyl-CoA starter unit with 3 malonyl-CoA units. The downstream nonribosomal peptide synthetase (NRPS) module then amidates the carboxyl end of the polyketide with L-malic acid. Because traA lacks a designated enoylreductase (ER) domain, the required activity is provided the enoyl reductase traG. Crustosic acid undergoes decarboxylation and isomerization to the terrestric acid, catalyzed by the 2-oxoglutarate-dependent dioxygenase traH. Both acids are further converted to the 2 gamma-butyrolactones (R)-5-methyltetronic acid and (S)-5-carboxylmethyltetronic acid, with involvement of the cytochrome P450 monooxygenase claJ. Spontaneous addition of the methide to these gamma-butyrolactones leads to peniphenone D and penilactone D, which undergo again stereospecific attacking by methide to give penilactones A and B. The function of the enoyl-CoA isomerase/hydratase claC has not been investigated yet. The polypeptide is Enoyl-CoA isomerase/hydratase claC (Penicillium crustosum (Blue mold fungus)).